Reading from the N-terminus, the 156-residue chain is uncharacterized protein (156 aa).

This is an uncharacterized protein from Saccharomyces cerevisiae (strain ATCC 204508 / S288c) (Baker's yeast).